The sequence spans 366 residues: Endophilin-B1 (366 aa).

The tract at residues methionine 1–leucine 30 is membrane-binding amphipathic helix. The tract at residues methionine 1–glutamate 37 is required for membrane binding. The BAR domain occupies glutamate 27–serine 261. 2 coiled-coil regions span residues glutamate 34–glutamine 54 and lysine 160–alanine 185. The region spanning serine 306–asparagine 366 is the SH3 domain.

This sequence belongs to the endophilin family. Homodimer, and heterodimer with SH3GLB2. Binds BAX. Binds DNM1, HTT, AMPH, BIN1 and ARFGAP1.

It is found in the cytoplasm. The protein localises to the golgi apparatus membrane. It localises to the mitochondrion outer membrane. May be required for normal outer mitochondrial membrane dynamics. Required for coatomer-mediated retrograde transport in certain cells. May recruit other proteins to membranes with high curvature. May promote membrane fusion. The chain is Endophilin-B1 from Gallus gallus (Chicken).